A 62-amino-acid polypeptide reads, in one-letter code: Small, acid-soluble spore protein H 1 (62 aa).

Belongs to the SspH family.

The protein resides in the spore core. The protein is Small, acid-soluble spore protein H 1 of Clostridium botulinum (strain ATCC 19397 / Type A).